A 113-amino-acid polypeptide reads, in one-letter code: Small ribosomal subunit protein eS24 (113 aa).

The protein belongs to the eukaryotic ribosomal protein eS24 family.

This Metallosphaera sedula (strain ATCC 51363 / DSM 5348 / JCM 9185 / NBRC 15509 / TH2) protein is Small ribosomal subunit protein eS24.